We begin with the raw amino-acid sequence, 152 residues long: MALDKSVILLPLLVLVLLVLGCLGRESRAKKFQRQHMDSGSSPSSNSTYCNQMMKRRSMTHGRCKPVNTFVHEPLVDVQNVCFQEKVTCKNGQTNCFKSKSSMHITDCRLTNGSRYPNCAYRTSPKERRIIVACEGSPYVPVHFDASVEDST.

The signal sequence occupies residues 1–24; the sequence is MALDKSVILLPLLVLVLLVLGCLG. Residues K31 and R34 each contribute to the substrate site. H36 acts as the Proton acceptor in catalysis. N-linked (GlcNAc...) asparagine glycosylation occurs at N46. Intrachain disulfides connect C50–C108, C64–C119, C82–C134, and C89–C96. Substrate-binding positions include 65-69, K90, and R109; that span reads KPVNT. N112 carries N-linked (GlcNAc...) asparagine glycosylation. The active-site Proton donor is the H143.

It belongs to the pancreatic ribonuclease family. As to quaternary structure, monomer. Interacts with and forms tight 1:1 complexes with RNH1. Dimerization of two such complexes may occur. Interaction with RNH1 inhibits this protein.

It is found in the secreted. The catalysed reaction is an [RNA] containing cytidine + H2O = an [RNA]-3'-cytidine-3'-phosphate + a 5'-hydroxy-ribonucleotide-3'-[RNA].. The enzyme catalyses an [RNA] containing uridine + H2O = an [RNA]-3'-uridine-3'-phosphate + a 5'-hydroxy-ribonucleotide-3'-[RNA].. Its function is as follows. Endonuclease that catalyzes the cleavage of RNA on the 3' side of pyrimidine nucleotides. Acts on single-stranded and double-stranded RNA. The protein is Ribonuclease pancreatic (RNASE1) of Papio hamadryas (Hamadryas baboon).